The sequence spans 246 residues: Adenosylcobinamide-GDP ribazoletransferase (246 aa).

The next 6 helical transmembrane spans lie at 34-54 (IVTF…VALL), 59-79 (CGVP…TGGF), 113-133 (GGLA…ELLL), 136-156 (IHPI…AALL), 181-201 (TLVT…LQGL), and 203-223 (AALI…RTLG).

It belongs to the CobS family. It depends on Mg(2+) as a cofactor.

The protein resides in the cell inner membrane. The catalysed reaction is alpha-ribazole + adenosylcob(III)inamide-GDP = adenosylcob(III)alamin + GMP + H(+). The enzyme catalyses alpha-ribazole 5'-phosphate + adenosylcob(III)inamide-GDP = adenosylcob(III)alamin 5'-phosphate + GMP + H(+). It functions in the pathway cofactor biosynthesis; adenosylcobalamin biosynthesis; adenosylcobalamin from cob(II)yrinate a,c-diamide: step 7/7. Its function is as follows. Joins adenosylcobinamide-GDP and alpha-ribazole to generate adenosylcobalamin (Ado-cobalamin). Also synthesizes adenosylcobalamin 5'-phosphate from adenosylcobinamide-GDP and alpha-ribazole 5'-phosphate. The polypeptide is Adenosylcobinamide-GDP ribazoletransferase (Klebsiella pneumoniae subsp. pneumoniae (strain ATCC 700721 / MGH 78578)).